Here is a 644-residue protein sequence, read N- to C-terminus: Sodium/potassium/calcium exchanger 3 (644 aa).

An N-terminal signal peptide occupies residues 1–44 (MRPSGDEDRARRRRRRRRRRDLLLSQLCFLASVALLLWSLSSLR). The Extracellular segment spans residues 45–107 (EQKELDLMDL…DIFTNEDRRQ (63 aa)). 2 N-linked (GlcNAc...) asparagine glycosylation sites follow: asparagine 71 and asparagine 86. Residues 108–128 (GAVVLHVLCAIYMFYALAIVC) traverse the membrane as a helical segment. Residues 129-153 (DDFFVPSLEKICERLHLSEDVAGAT) are Cytoplasmic-facing. The stretch at 149–189 (VAGATFMAAGSSAPELFTSVIGVFITKGDVGVGTIVGSAVF) is one Alpha-1 repeat. The helical transmembrane segment at 154-174 (FMAAGSSAPELFTSVIGVFIT) threads the bilayer. Over 175-182 (KGDVGVGT) the chain is Extracellular. Residues 183–203 (IVGSAVFNILCIIGVCGLFAG) traverse the membrane as a helical segment. Residues 204–210 (QVVALSS) lie on the Cytoplasmic side of the membrane. Residues 211 to 231 (WCLLRDSIYYTLSVIALIVFI) traverse the membrane as a helical segment. The Extracellular portion of the chain corresponds to 232 to 234 (YDE). A helical transmembrane segment spans residues 235–255 (KVSWWESLVLVLMYLIYIVIM). Topologically, residues 256-484 (KYNACIHQCF…WFMVTFASST (229 aa)) are cytoplasmic. Serine 308 is modified (phosphoserine). The disordered stretch occupies residues 405–442 (AEAGNETENENEDNENDEEEEEDEDDDEGPYTPFDTPS). Residues 409–433 (NETENENEDNENDEEEEEDEDDDEG) show a composition bias toward acidic residues. Residues 485-505 (LWIAAFSYMMVWMVTIIGYTL) traverse the membrane as a helical segment. The Extracellular segment spans residues 506–510 (GIPDV). A helical transmembrane segment spans residues 511–531 (IMGITFLAAGTSVPDCMASLI). Residues 518-549 (AAGTSVPDCMASLIVARQGMGDMAVSNSIGSN) form an Alpha-2 repeat. Over 532–549 (VARQGMGDMAVSNSIGSN) the chain is Cytoplasmic. The chain crosses the membrane as a helical span at residues 550 to 570 (VFDILIGLGLPWALQTLAVDY). Residues 571-580 (GSYIRLNSRG) are Extracellular-facing. The helical transmembrane segment at 581–601 (LIYSVGLLLASVFVTVFGVHL) threads the bilayer. The Cytoplasmic segment spans residues 602-615 (NKWQLDKKLGCGCL). Residues 616 to 636 (LLYGVFLCFSIMTEFNVFTFV) form a helical membrane-spanning segment. Residues 637–644 (NLPMCGDH) lie on the Extracellular side of the membrane.

This sequence belongs to the Ca(2+):cation antiporter (CaCA) (TC 2.A.19) family. SLC24A subfamily. As to expression, abundant in the brain. Expressed at low levels in the aorta, uterus and intestine.

The protein localises to the cell membrane. The enzyme catalyses Ca(2+)(out) + K(+)(out) + 4 Na(+)(in) = Ca(2+)(in) + K(+)(in) + 4 Na(+)(out). In terms of biological role, calcium, potassium:sodium antiporter that transports 1 Ca(2+) and 1 K(+) in exchange for 4 Na(+). The protein is Sodium/potassium/calcium exchanger 3 (SLC24A3) of Homo sapiens (Human).